A 372-amino-acid polypeptide reads, in one-letter code: Cyclic GMP-AMP synthase-like receptor (372 aa).

T68 provides a ligand contact to GTP. ATP contacts are provided by residues S70 and E82 to D84. E82, D84, and D190 together coordinate Mg(2+). GTP-binding positions include D190 and L236 to E243. Residues P240–E243, K261, and S274–K278 contribute to the ATP site.

It belongs to the mab-21 family. It depends on Mg(2+) as a cofactor. The cofactor is Mn(2+).

It carries out the reaction GTP + ATP = 3',2'-cGAMP + 2 diphosphate. It catalyses the reaction GTP + ATP = pppA(2'-5')pG + diphosphate. The catalysed reaction is pppA(2'-5')pG = 3',2'-cGAMP + diphosphate. The enzyme activity is specifically activated by double-stranded RNA (dsRNA). In terms of biological role, nucleotidyltransferase that catalyzes the formation of cyclic GMP-AMP (3',2'-cGAMP) from ATP and GTP and plays a key role in innate immunity. Synthesizes 3',2'-cGAMP in a two-step reaction through production of the linear intermediate pppA(2'-5')pG. Acts as a key sensor of double-stranded RNA (dsRNA), the presence of dsRNA in the cytoplasm being a danger signal that triggers the immune responses. Directly binds dsRNA longer than 15 bp, activating the nucleotidyltransferase activity, leading to synthesis of 3',2'-cGAMP, a second messenger that binds to and activates Sting, thereby triggering the antiviral immune response via activation of the NF-kappa-B transcription factor Rel (Relish). This chain is Cyclic GMP-AMP synthase-like receptor, found in Drosophila eugracilis (Fruit fly).